The primary structure comprises 651 residues: Protein RcaC (651 aa).

Positions K2 to L116 constitute a Response regulatory 1 domain. D51 is modified (4-aspartylphosphate). Positions F124–A223 form a DNA-binding region, ompR/PhoB-type. 2 consecutive Response regulatory domains span residues L384–L519 and K527–L643.

Functionally, required for chromatic adaptation. Thought to be a positive regulator of phycobiliproteins. This is Protein RcaC (rcaC) from Microchaete diplosiphon (Fremyella diplosiphon).